Consider the following 161-residue polypeptide: Thy-1 membrane glycoprotein (161 aa).

Positions 1-19 (MNPVISITLLLSVLQMSRG) are cleaved as a signal peptide. Position 20 is a pyrrolidone carboxylic acid (Gln20). Positions 20–126 (QRVISLTACL…NKTINVIRDK (107 aa)) constitute an Ig-like V-type domain. Disulfide bonds link Cys28–Cys130 and Cys38–Cys104. An N-linked (GlcNAc...) (complex) asparagine; alternate glycan is attached at Asn42. N-linked (GlcNAc...) (high mannose) asparagine; alternate glycosylation is present at Asn42. Asn42 carries an N-linked (GlcNAc...) asparagine; alternate glycan. Ser82 carries the post-translational modification Phosphoserine. The N-linked (GlcNAc...) (complex) asparagine; alternate glycan is linked to Asn93. N-linked (GlcNAc...) asparagine; alternate glycosylation is present at Asn93. N-linked (GlcNAc...) (high mannose) asparagine; in brain; alternate glycosylation occurs at Asn117. Asn117 carries an N-linked (GlcNAc...) (hybrid) asparagine; in brain; alternate glycan. Residue Cys130 is the site of GPI-anchor amidated cysteine attachment. Residues 131-161 (GGISLLVQNTSWLLLLLLSLSFLQATDFISL) constitute a propeptide, removed in mature form.

Post-translationally, glycosylation is tissue specific. Sialylation of N-glycans at Asn-93 in brain and at Asn-42, Asn-93 and Asn-117 in thymus. As to expression, abundant in lymphoid tissues.

The protein localises to the cell membrane. Functionally, may play a role in cell-cell or cell-ligand interactions during synaptogenesis and other events in the brain. This is Thy-1 membrane glycoprotein (Thy1) from Rattus norvegicus (Rat).